The following is a 380-amino-acid chain: Alcohol dehydrogenase 1 (380 aa).

Positions 48, 50, 70, 100, 103, 106, 114, and 178 each coordinate Zn(2+). Residues Thr-50 and His-70 each contribute to the an alcohol site. Thr-50 is a binding site for NAD(+). Residues 203-208 (GLGAVG), Asp-227, Arg-232, Thr-273, Val-296, 296-298 (VGV), and Arg-373 each bind NAD(+).

It belongs to the zinc-containing alcohol dehydrogenase family. As to quaternary structure, homodimer. It depends on Zn(2+) as a cofactor.

Its subcellular location is the cytoplasm. The enzyme catalyses a primary alcohol + NAD(+) = an aldehyde + NADH + H(+). The catalysed reaction is a secondary alcohol + NAD(+) = a ketone + NADH + H(+). This chain is Alcohol dehydrogenase 1 (ADH1), found in Trifolium repens (Creeping white clover).